We begin with the raw amino-acid sequence, 229 residues long: DNA repair protein RecO (229 aa).

The protein belongs to the RecO family.

Its function is as follows. Involved in DNA repair and RecF pathway recombination. The sequence is that of DNA repair protein RecO from Legionella pneumophila (strain Paris).